A 440-amino-acid chain; its full sequence is Thymidine phosphorylase (440 aa).

It belongs to the thymidine/pyrimidine-nucleoside phosphorylase family. Homodimer.

It carries out the reaction thymidine + phosphate = 2-deoxy-alpha-D-ribose 1-phosphate + thymine. It functions in the pathway pyrimidine metabolism; dTMP biosynthesis via salvage pathway; dTMP from thymine: step 1/2. The enzymes which catalyze the reversible phosphorolysis of pyrimidine nucleosides are involved in the degradation of these compounds and in their utilization as carbon and energy sources, or in the rescue of pyrimidine bases for nucleotide synthesis. The chain is Thymidine phosphorylase from Shigella flexneri serotype 5b (strain 8401).